The primary structure comprises 603 residues: Growth-regulating factor 6 (603 aa).

Positions 34 to 58 are disordered; it reads KHGRGNAGDQEHEWRPPAKQARGGD. The QLQ domain occupies 158–193; the sequence is PFTPSQWIELEHQALIYKYLAANSPVPHSLLIPIRR. Residues 223–267 form the WRC domain; the sequence is DPEPGRCRRTDGKKWRCSRDAVADQKYCERHMNRGRHRSRKHVEG. 2 consecutive short sequence motifs (bipartite nuclear localization signal) follow at residues 228-238 and 256-263; these read RCRRTDGKKWR and RGRHRSRK. Low complexity predominate over residues 561 to 571; sequence FGSVSSSTGSS. Positions 561–582 are disordered; it reads FGSVSSSTGSSPRLENHSVYDG.

This sequence belongs to the GRF family.

It localises to the nucleus. Transcription activator that plays a regulatory role in gibberellin-induced stem elongation. This is Growth-regulating factor 6 (GRF6) from Oryza sativa subsp. japonica (Rice).